Consider the following 427-residue polypeptide: Glutamate-1-semialdehyde 2,1-aminomutase (427 aa).

Lys265 is modified (N6-(pyridoxal phosphate)lysine).

Belongs to the class-III pyridoxal-phosphate-dependent aminotransferase family. HemL subfamily. Homodimer. Requires pyridoxal 5'-phosphate as cofactor.

It localises to the cytoplasm. It carries out the reaction (S)-4-amino-5-oxopentanoate = 5-aminolevulinate. The protein operates within porphyrin-containing compound metabolism; protoporphyrin-IX biosynthesis; 5-aminolevulinate from L-glutamyl-tRNA(Glu): step 2/2. This is Glutamate-1-semialdehyde 2,1-aminomutase from Shewanella amazonensis (strain ATCC BAA-1098 / SB2B).